Here is a 39-residue protein sequence, read N- to C-terminus: U2-ctenitoxin-Co1a (39 aa).

In terms of processing, disulfide bonds are present. As to expression, expressed by the venom gland.

Its subcellular location is the secreted. Its function is as follows. Omega-agatoxins are antagonists of voltage-gated calcium channels (Cav). The sequence is that of U2-ctenitoxin-Co1a from Ctenus ornatus (Brazilian spider).